Here is a 199-residue protein sequence, read N- to C-terminus: dITP/XTP pyrophosphatase (199 aa).

8–13 (SGNAGK) provides a ligand contact to substrate. Residue Asp69 is the Proton acceptor of the active site. Asp69 is a binding site for Mg(2+). Residues Ser70, 154 to 157 (FGYN), Lys177, and 182 to 183 (HR) contribute to the substrate site.

Belongs to the HAM1 NTPase family. As to quaternary structure, homodimer. Requires Mg(2+) as cofactor.

It carries out the reaction XTP + H2O = XMP + diphosphate + H(+). The catalysed reaction is dITP + H2O = dIMP + diphosphate + H(+). It catalyses the reaction ITP + H2O = IMP + diphosphate + H(+). Pyrophosphatase that catalyzes the hydrolysis of nucleoside triphosphates to their monophosphate derivatives, with a high preference for the non-canonical purine nucleotides XTP (xanthosine triphosphate), dITP (deoxyinosine triphosphate) and ITP. Seems to function as a house-cleaning enzyme that removes non-canonical purine nucleotides from the nucleotide pool, thus preventing their incorporation into DNA/RNA and avoiding chromosomal lesions. This is dITP/XTP pyrophosphatase from Xylella fastidiosa (strain 9a5c).